Consider the following 179-residue polypeptide: MTMEFDPRRERRKVQKKMNVFDHRLISSNSNHRINIWRPTVSIKDNKTHISIIFELAGISRDQISIEVTKENTLVITGEKKSKGGLNNLPSSSSSINSDSTTNTNTNTTTTTTTAPPPPSDAQLKNIITIGKFIRSYKLPPGTDSSKIKATMDDGLLEIIIPKDTPSEDRLKIPIQSKL.

The sHSP domain occupies 32 to 178; it reads HRINIWRPTV…DRLKIPIQSK (147 aa). Positions 80–122 are disordered; it reads KKSKGGLNNLPSSSSSINSDSTTNTNTNTTTTTTTAPPPPSDA. Residues 87-114 show a composition bias toward low complexity; the sequence is NNLPSSSSSINSDSTTNTNTNTTTTTTT.

Belongs to the small heat shock protein (HSP20) family.

The protein is Small heat shock protein hspK (hspK) of Dictyostelium discoideum (Social amoeba).